We begin with the raw amino-acid sequence, 199 residues long: Protein GrpE (199 aa).

The interval 1–50 (MAKKSTRTTPEDSQASTTDSAATSTASEATQAATSATDDQAEQTTAVDPT) is disordered. Positions 11 to 46 (EDSQASTTDSAATSTASEATQAATSATDDQAEQTTA) are enriched in low complexity.

The protein belongs to the GrpE family. As to quaternary structure, homodimer.

Its subcellular location is the cytoplasm. In terms of biological role, participates actively in the response to hyperosmotic and heat shock by preventing the aggregation of stress-denatured proteins, in association with DnaK and GrpE. It is the nucleotide exchange factor for DnaK and may function as a thermosensor. Unfolded proteins bind initially to DnaJ; upon interaction with the DnaJ-bound protein, DnaK hydrolyzes its bound ATP, resulting in the formation of a stable complex. GrpE releases ADP from DnaK; ATP binding to DnaK triggers the release of the substrate protein, thus completing the reaction cycle. Several rounds of ATP-dependent interactions between DnaJ, DnaK and GrpE are required for fully efficient folding. This is Protein GrpE from Lactiplantibacillus plantarum (strain ATCC BAA-793 / NCIMB 8826 / WCFS1) (Lactobacillus plantarum).